A 117-amino-acid chain; its full sequence is DNA-directed RNA polymerase II subunit RPB11 (117 aa).

M1 is modified (N-acetylmethionine).

The protein belongs to the archaeal Rpo11/eukaryotic RPB11/RPC19 RNA polymerase subunit family. Component of the RNA polymerase II (Pol II) core complex consisting of 12 subunits: a ten-subunit catalytic core composed of POLR2A/RPB1, POLR2B/RPB2, POLR2C/RPB3, POLR2I/RPB9, POLR2J/RPB11, POLR2E/RPABC1, POLR2F/RPABC2, POLR2H/RPABC3, POLR2K/RPABC4 and POLR2L/RPABC5 and a mobile stalk composed of two subunits POLR2D/RPB4 and POLR2G/RPB7, protruding from the core and functioning primarily in transcription initiation. Part of Pol II(G) complex, in which Pol II core associates with an additional subunit POLR2M; unlike conventional Pol II, Pol II(G) functions as a transcriptional repressor. Part of TBP-based Pol II pre-initiation complex (PIC), in which Pol II core assembles with general transcription factors and other specific initiation factors including GTF2E1, GTF2E2, GTF2F1, GTF2F2, TCEA1, ERCC2, ERCC3, GTF2H2, GTF2H3, GTF2H4, GTF2H5, GTF2A1, GTF2A2, GTF2B and TBP; this large multi-subunit PIC complex mediates DNA unwinding and targets Pol II core to the transcription start site where the first phosphodiester bond forms. Interacts with AATF. Interacts with PTPN6; this interaction promotes the recruitment of RNA pol II to the PCK1 promoter.

The protein localises to the nucleus. Its function is as follows. Core component of RNA polymerase II (Pol II), a DNA-dependent RNA polymerase which synthesizes mRNA precursors and many functional non-coding RNAs using the four ribonucleoside triphosphates as substrates. The polypeptide is DNA-directed RNA polymerase II subunit RPB11 (Polr2j) (Mus musculus (Mouse)).